The sequence spans 149 residues: Urease accessory protein UreE (149 aa).

Belongs to the UreE family.

It localises to the cytoplasm. In terms of biological role, involved in urease metallocenter assembly. Binds nickel. Probably functions as a nickel donor during metallocenter assembly. This is Urease accessory protein UreE from Prochlorococcus marinus (strain MIT 9312).